Consider the following 219-residue polypeptide: Deoxyribose-phosphate aldolase (219 aa).

Aspartate 89 functions as the Proton donor/acceptor in the catalytic mechanism. Lysine 151 acts as the Schiff-base intermediate with acetaldehyde in catalysis. The active-site Proton donor/acceptor is lysine 180.

This sequence belongs to the DeoC/FbaB aldolase family. DeoC type 1 subfamily.

The protein resides in the cytoplasm. The catalysed reaction is 2-deoxy-D-ribose 5-phosphate = D-glyceraldehyde 3-phosphate + acetaldehyde. The protein operates within carbohydrate degradation; 2-deoxy-D-ribose 1-phosphate degradation; D-glyceraldehyde 3-phosphate and acetaldehyde from 2-deoxy-alpha-D-ribose 1-phosphate: step 2/2. In terms of biological role, catalyzes a reversible aldol reaction between acetaldehyde and D-glyceraldehyde 3-phosphate to generate 2-deoxy-D-ribose 5-phosphate. The protein is Deoxyribose-phosphate aldolase of Clostridioides difficile (strain 630) (Peptoclostridium difficile).